Consider the following 127-residue polypeptide: uncharacterized protein (127 aa).

In terms of domain architecture, VOC spans 1-127; it reads MKIVVTSIFV…CGNLIQIVQK (127 aa).

Belongs to the glyoxalase I family.

This is an uncharacterized protein from Bacillus subtilis (strain 168).